Reading from the N-terminus, the 626-residue chain is Anaphase-promoting complex subunit CDC23 (626 aa).

Ser-59 is subject to Phosphoserine; by CDC28. TPR repeat units follow at residues 215 to 248 (ALLYYLRGVILKQEKNISKAMSSFLKSLSCYSFN), 295 to 328 (MIKFFKLKVFEELNGQLEDYFEDLEFLLQVFPNF), 329 to 362 (TFLKAYNATISYNNLDYVTAESRFDDIVKQDPYR), 363 to 396 (LNDLETYSNILYVMQKNSKLAYLAQFVSQIDRFR), 397 to 430 (PETCCIIANYYSARQEHEKSIMYFRRALTLDKKT), 431 to 464 (TNAWTLMGHEFVELSNSHAAIECYRRAVDICPRD), 465 to 498 (FKAWFGLGQAYALLDMHLYSLYYFQKACTLKPWD), 499 to 532 (RRIWQVLGECYSKTGNKVEAIKCYKRSIKASQTV), and 536 to 569 (TSIYYRLAQLYEELEDLQECKKFMMKCVDVEELL).

This sequence belongs to the APC8/CDC23 family. In terms of assembly, the APC/C is composed of at least 13 subunits that stay tightly associated throughout the cell cycle: APC1, APC2, APC4, APC5, APC9, APC11, CDC16, CDC23, CDC26, CDC27, DOC1, MND2 and SWM1. CDC23 interacts directly with SWM1 and binds the destruction box (D-box) of the substrate cyclin CLB2. Post-translationally, phosphorylated by CDC28, which is required for the early mitotic activity of the APC/C in its CDC20-bound form.

It is found in the nucleus. It localises to the chromosome. The protein localises to the centromere. Its subcellular location is the kinetochore. It participates in protein modification; protein ubiquitination. Component of the anaphase promoting complex/cyclosome (APC/C), a cell cycle-regulated E3 ubiquitin-protein ligase complex that controls progression through mitosis and the G1 phase of the cell cycle. The APC/C is thought to confer substrate specificity and, in the presence of ubiquitin-conjugating E2 enzymes, it catalyzes the formation of protein-ubiquitin conjugates that are subsequently degraded by the 26S proteasome. In early mitosis, the APC/C is activated by CDC20 and targets securin PDS1, the B-type cyclin CLB5, and other anaphase inhibitory proteins for proteolysis, thereby triggering the separation of sister chromatids at the metaphase-to-anaphase transition. In late mitosis and in G1, degradation of CLB5 allows activation of the APC/C by CDH1, which is needed to destroy CDC20 and the B-type cyclin CLB2 to allow exit from mitosis and creating the low CDK state necessary for cytokinesis and for reforming prereplicative complexes in G1 prior to another round of replication. The protein is Anaphase-promoting complex subunit CDC23 (CDC23) of Saccharomyces cerevisiae (strain ATCC 204508 / S288c) (Baker's yeast).